We begin with the raw amino-acid sequence, 128 residues long: Small nuclear ribonucleoprotein associated homolog 13 (128 aa).

The protein belongs to the eukaryotic ribosomal protein eL8 family.

It localises to the nucleus. Its subcellular location is the nucleolus. In terms of biological role, binds to the 5'-stem-loop of U4 snRNA and may play a role in the late stage of spliceosome assembly. The protein undergoes a conformational change upon RNA-binding. The protein is Small nuclear ribonucleoprotein associated homolog 13 of Caenorhabditis elegans.